The chain runs to 21 residues: Thanatin (21 aa).

C11 and C18 are disulfide-bonded.

Its subcellular location is the secreted. In terms of biological role, insect defense peptide with a broad spectrum of activity against Gram-positive and Gram-negative bacteria and fungi. No activity against S.aureus. Stops respiration in bacteria but does not permeabilize their inner membranes. The protein is Thanatin of Podisus maculiventris (Spined soldier bug).